Reading from the N-terminus, the 687-residue chain is RNA-binding protein VTS1 (687 aa).

Over residues 1 to 10 (MASHTLRPHR) the composition is skewed to basic residues. Disordered stretches follow at residues 1–115 (MASH…TPEA), 248–341 (AAAK…PGIG), and 526–598 (SPFN…AGVA). A compositionally biased stretch (polar residues) spans 29 to 41 (TRQSLGPPTSGNS). Positions 52–68 (GLASPSSPSQPRHVSSS) are enriched in low complexity. Residues 287 to 301 (GLESNMSGRSRSKSP) show a composition bias toward polar residues. Residues 305–324 (PRPKSTDFSGKPRESLRRES) show a composition bias toward basic and acidic residues. The span at 526 to 539 (SPFNASAPSLQPGL) shows a compositional bias: polar residues. Low complexity predominate over residues 550–566 (QSSHLNQHYNQHQQQHQ). Over residues 585-597 (QTGGGGAGGGAGV) the composition is skewed to gly residues. The 62-residue stretch at 606 to 667 (KVLEDVPNWL…LKVFYNVRTK (62 aa)) folds into the SAM domain.

Belongs to the VTS1 family. In terms of assembly, monomer. Binds to RNA.

The protein localises to the cytoplasm. It localises to the cytosol. The protein resides in the P-body. In terms of biological role, RNA-binding protein involved in post-transcriptional regulation through transcript degradation. The protein is RNA-binding protein VTS1 of Cryptococcus neoformans var. grubii serotype A (strain H99 / ATCC 208821 / CBS 10515 / FGSC 9487) (Filobasidiella neoformans var. grubii).